The primary structure comprises 61 residues: Small ribosomal subunit protein uS14 (61 aa).

Zn(2+) is bound by residues C24, C27, C40, and C43.

It belongs to the universal ribosomal protein uS14 family. Zinc-binding uS14 subfamily. In terms of assembly, part of the 30S ribosomal subunit. Contacts proteins S3 and S10. The cofactor is Zn(2+).

Its function is as follows. Binds 16S rRNA, required for the assembly of 30S particles and may also be responsible for determining the conformation of the 16S rRNA at the A site. The polypeptide is Small ribosomal subunit protein uS14 (Elusimicrobium minutum (strain Pei191)).